We begin with the raw amino-acid sequence, 73 residues long: Large ribosomal subunit protein bL31 (73 aa).

This sequence belongs to the bacterial ribosomal protein bL31 family. Type A subfamily. Part of the 50S ribosomal subunit. Contacts protein L9.

Its function is as follows. Binds the 23S rRNA and interacts with the tRNA in the E site. This is Large ribosomal subunit protein bL31 (rpmE) from Deinococcus radiodurans (strain ATCC 13939 / DSM 20539 / JCM 16871 / CCUG 27074 / LMG 4051 / NBRC 15346 / NCIMB 9279 / VKM B-1422 / R1).